Consider the following 626-residue polypeptide: Dynein, cytoplasmic 1, intermediate chain 2a (626 aa).

Residues 20 to 43 (QIREEKKRKEEERKKKEAELKKDA) are compositionally biased toward basic and acidic residues. Disordered stretches follow at residues 20-108 (QIRE…RTLH) and 142-197 (KEVV…HELT). Over residues 82–99 (TAKSVGSPSEAGSQDSGD) the composition is skewed to polar residues. Residues 160 to 169 (KDEEDEEEET) show a composition bias toward acidic residues. Residues 177-197 (ETEKEKPEEKQVEEALPHELT) are compositionally biased toward basic and acidic residues. WD repeat units lie at residues 265-314 (SKQR…ATPE), 318-358 (HCQS…RTPV), 367-408 (AHTH…QPQD), 417-457 (SKSV…AGIS), 462-507 (GHHG…PLYS), 510-550 (DNSD…EVPT), and 556-595 (DGSP…AVPR).

It belongs to the dynein intermediate chain family. Homodimer. The cytoplasmic dynein 1 complex consists of two catalytic heavy chains (HCs) and a number of non-catalytic subunits presented by intermediate chains (ICs), light intermediate chains (LICs) and light chains (LCs); the composition seems to vary in respect to the IC, LIC and LC composition. The heavy chain homodimer serves as a scaffold for the probable homodimeric assembly of the respective non-catalytic subunits. The ICs and LICs bind directly to the HC dimer and the LCs assemble on the IC dimer.

Its subcellular location is the cytoplasm. It is found in the cytoskeleton. Functionally, acts as one of several non-catalytic accessory components of the cytoplasmic dynein 1 complex that are thought to be involved in linking dynein to cargos and to adapter proteins that regulate dynein function. Cytoplasmic dynein 1 acts as a motor for the intracellular retrograde motility of vesicles and organelles along microtubules. Plays a role in the development of anterior brain and cartilaginous structures. The polypeptide is Dynein, cytoplasmic 1, intermediate chain 2a (dync1i2a) (Danio rerio (Zebrafish)).